The sequence spans 289 residues: Ribonuclease HII (289 aa).

Residues 1–55 (MIRDQAKTPGRAKSAAAAKASPAAKGGGNEAAQSAAGKAAAKPAAKPATSKSGKG) form a disordered region. Low complexity-rich tracts occupy residues 7-24 (KTPG…SPAA) and 31-55 (AAQS…SGKG). An RNase H type-2 domain is found at 76-264 (WPVAGCDEAG…VVAARRKHQP (189 aa)). 3 residues coordinate a divalent metal cation: Asp82, Glu83, and Asp173.

This sequence belongs to the RNase HII family. Requires Mn(2+) as cofactor. The cofactor is Mg(2+).

The protein resides in the cytoplasm. It catalyses the reaction Endonucleolytic cleavage to 5'-phosphomonoester.. In terms of biological role, endonuclease that specifically degrades the RNA of RNA-DNA hybrids. In Bradyrhizobium sp. (strain BTAi1 / ATCC BAA-1182), this protein is Ribonuclease HII.